Reading from the N-terminus, the 105-residue chain is Ferredoxin--nitrite reductase, chloroplastic (105 aa).

Residues C28 and C32 each coordinate [4Fe-4S] cluster. Position 32 (C32) interacts with siroheme.

The protein belongs to the nitrite and sulfite reductase 4Fe-4S domain family. In terms of assembly, monomer. It depends on siroheme as a cofactor. [4Fe-4S] cluster is required as a cofactor. In terms of tissue distribution, highest expression in roots and hypocotyls. Some expression in cotyledonary whorls.

It localises to the plastid. It is found in the chloroplast. The catalysed reaction is 6 oxidized [2Fe-2S]-[ferredoxin] + NH4(+) + 2 H2O = nitrite + 6 reduced [2Fe-2S]-[ferredoxin] + 8 H(+). It functions in the pathway nitrogen metabolism; nitrate reduction (assimilation). The chain is Ferredoxin--nitrite reductase, chloroplastic (NIR) from Pinus sylvestris (Scotch pine).